We begin with the raw amino-acid sequence, 232 residues long: Cytidylate kinase (232 aa).

11–19 (GPAGAGKST) provides a ligand contact to ATP.

It belongs to the cytidylate kinase family. Type 1 subfamily.

It localises to the cytoplasm. The enzyme catalyses CMP + ATP = CDP + ADP. It catalyses the reaction dCMP + ATP = dCDP + ADP. The sequence is that of Cytidylate kinase from Roseiflexus castenholzii (strain DSM 13941 / HLO8).